Here is a 226-residue protein sequence, read N- to C-terminus: Glutathione S-transferase kappa 1 (226 aa).

A glutathione-binding site is contributed by 16-18 (SPY). Position 49 is an N6-succinyllysine (lysine 49). Asparagine 53 provides a ligand contact to glutathione. An N6-acetyllysine mark is found at lysine 71 and lysine 85. Lysine 116 is subject to N6-acetyllysine; alternate. Lysine 116 is modified (N6-succinyllysine; alternate). Lysine 144 is subject to N6-succinyllysine. Lysine 158 is modified (N6-acetyllysine; alternate). Lysine 158 carries the N6-succinyllysine; alternate modification. N6-acetyllysine is present on residues lysine 165 and lysine 169. Glutathione-binding positions include leucine 183 and 200–201 (SD).

The protein belongs to the GST superfamily. Kappa family. In terms of assembly, homodimer. Ubiquitous.

The protein resides in the peroxisome. It catalyses the reaction RX + glutathione = an S-substituted glutathione + a halide anion + H(+). Functionally, glutathione S-transferase that catalyzes the conjugation of glutathione to exogenous and endogenous compounds. Significant glutathione conjugating activity is found only with the model substrate, 1-chloro-2,4-dinitrobenzene (CDNB). This is Glutathione S-transferase kappa 1 (GSTK1) from Homo sapiens (Human).